The following is a 211-amino-acid chain: Cell division protein SepF (211 aa).

Over residues 15 to 26 (DTDEVNEVEEEV) the composition is skewed to acidic residues. The disordered stretch occupies residues 15-111 (DTDEVNEVEE…ETYQAQTTVQ (97 aa)). 3 stretches are compositionally biased toward polar residues: residues 44–57 (IPSQQTSRQSQNPA), 64–81 (ARSQQTESDSLPTYPNRQ), and 91–111 (RESVTASTARRETYQAQTTVQ).

This sequence belongs to the SepF family. Homodimer. Interacts with FtsZ.

It localises to the cytoplasm. Its function is as follows. Cell division protein that is part of the divisome complex and is recruited early to the Z-ring. Probably stimulates Z-ring formation, perhaps through the cross-linking of FtsZ protofilaments. Its function overlaps with FtsA. The chain is Cell division protein SepF from Streptococcus uberis (strain ATCC BAA-854 / 0140J).